The primary structure comprises 77 residues: Large ribosomal subunit protein uL29 (77 aa).

It belongs to the universal ribosomal protein uL29 family.

This is Large ribosomal subunit protein uL29 from Gluconobacter oxydans (strain 621H) (Gluconobacter suboxydans).